The following is an 87-amino-acid chain: Defensin-A (87 aa).

The signal sequence occupies residues 1 to 19; it reads MKFYLVLAFLTLCAVAVTA. Positions 20-44 are excised as a propeptide; that stretch reads LPAGDETRIDLETLEEDLRLVDGAQ. 3 disulfide bridges follow: C57-C78, C64-C83, and C68-C85.

In terms of tissue distribution, hemolymph and fat body.

It is found in the secreted. Functionally, antibacterial peptide mostly active against Gram-positive and Gram negative bacteria. This Glossina morsitans morsitans (Savannah tsetse fly) protein is Defensin-A.